A 1044-amino-acid polypeptide reads, in one-letter code: Isoleucine--tRNA ligase (1044 aa).

The 'HIGH' region motif lies at 48-58; it reads PFATGLPHFGH. The 'KMSKS' region signature appears at 594–598; it reads KMSKS. Position 597 (Lys597) interacts with ATP.

The protein belongs to the class-I aminoacyl-tRNA synthetase family. IleS type 2 subfamily. In terms of assembly, monomer. Zn(2+) is required as a cofactor.

Its subcellular location is the cytoplasm. It carries out the reaction tRNA(Ile) + L-isoleucine + ATP = L-isoleucyl-tRNA(Ile) + AMP + diphosphate. Functionally, catalyzes the attachment of isoleucine to tRNA(Ile). As IleRS can inadvertently accommodate and process structurally similar amino acids such as valine, to avoid such errors it has two additional distinct tRNA(Ile)-dependent editing activities. One activity is designated as 'pretransfer' editing and involves the hydrolysis of activated Val-AMP. The other activity is designated 'posttransfer' editing and involves deacylation of mischarged Val-tRNA(Ile). This chain is Isoleucine--tRNA ligase, found in Borrelia turicatae (strain 91E135).